Reading from the N-terminus, the 973-residue chain is Short transient receptor potential channel 5 (973 aa).

The Cytoplasmic portion of the chain corresponds to 1-325 (MAQLYYKKVN…YDGFPGWRRK (325 aa)). 4 ANK repeats span residues 30 to 60 (SAEE…IYYN), 69 to 97 (LGRS…VYVG), 98 to 124 (DALL…PSGE), and 141 to 170 (PDIT…TIPR). Residues H172, C176, C178, and C181 each coordinate Zn(2+). Residues 326–360 (HWVVKLLTCMTIGFLFPMLSIAYLISPRSNLGLFI) constitute an intramembrane region (discontinuously helical). Topologically, residues 361 to 363 (KKP) are cytoplasmic. A helical membrane pass occupies residues 364-384 (FIKFICHTASYLTFLFMLLLA). The Extracellular portion of the chain corresponds to 385-404 (SQHIVRTDLHVQGPPPTVVE). A helical transmembrane segment spans residues 405 to 419 (WMILPWVLGFIWGEI). Residues E418, E421, N436, and D439 each coordinate Ca(2+). Residues 420–433 (KEMWDGGFTEYIHD) lie on the Cytoplasmic side of the membrane. The chain crosses the membrane as a helical span at residues 434–454 (WWNLMDFAMNSLYLATISLKI). The Extracellular portion of the chain corresponds to 455 to 476 (VAYVKYNGSRPREEWEMWHPTL). N-linked (GlcNAc...) asparagine glycosylation occurs at N461. Residues 477–497 (IAEALFAISNILSSLRLISLF) traverse the membrane as a helical segment. Residues 498–512 (TANSHLGPLQISLGR) are Cytoplasmic-facing. The helical transmembrane segment at 513-535 (MLLDILKFLFIYCLVLLAFANGL) threads the bilayer. Over 536–603 (NQLYFYYETR…HEFTEFVGAT (68 aa)) the chain is Extracellular. An intrachain disulfide couples C553 to C558. The helical transmembrane segment at 604–624 (MFGTYNVISLVVLLNMLIAMM) threads the bilayer. The Cytoplasmic segment spans residues 625–973 (NNSYQLIADH…GQEEQVTTRL (349 aa)). 2 disordered regions span residues 766–794 (HPRS…RAKS) and 810–837 (GPPL…KRSF). The essential for binding to NHERF1 PDZ domain stretch occupies residues 971–973 (TRL).

Belongs to the transient receptor (TC 1.A.4) family. STrpC subfamily. TRPC5 sub-subfamily. As to quaternary structure, homotetramer. Heterotetramer with TRPC1 and/or TRPC4. Each subunit in the homomeric ion channel (via ANK repeats) interacts with one copy of GTP-bound GNAI3; the interaction is direct and activates the ion channel. Interacts with TRPC4AP. Interacts with NHERF1. Interacts with MX1 and RNF24. Interacts (via C-terminus) with CABP1. Interacts with SESTD1 (via the spectrin 1 repeat). Interacts with PLSCR1. Interacts with PKD2L2. As to expression, expressed in brain with higher levels in fetal brain. Found in cerebellum and occipital pole.

Its subcellular location is the cell membrane. It catalyses the reaction Ca(2+)(in) = Ca(2+)(out). Activated by G-protein coupled receptors via direct interaction with GTP-bound GNAI3, which increases the channel sensitivity to phosphatidylinositol bisphosphate. May be activated by intracellular calcium store depletion. Calcium channel activity is enhanced by MYLK, that promotes its subcellular localization at the plasma membrane. Forms a receptor-activated non-selective calcium permeant cation channel. Mediates calcium-dependent phosphatidylserine externalization and apoptosis in neurons via its association with PLSCR1. Acts on distinct neuronal populations in the hypothalamus to regulate innate behaviors including feeding, anxiety (flight/fight/fear), socialization, and maternal care. The polypeptide is Short transient receptor potential channel 5 (TRPC5) (Homo sapiens (Human)).